The sequence spans 270 residues: 5-deoxy-glucuronate isomerase (270 aa).

Belongs to the isomerase IolB family.

It catalyses the reaction 5-deoxy-D-glucuronate = 5-dehydro-2-deoxy-D-gluconate. It participates in polyol metabolism; myo-inositol degradation into acetyl-CoA; acetyl-CoA from myo-inositol: step 4/7. Its function is as follows. Involved in the isomerization of 5-deoxy-glucuronate (5DG) to 5-dehydro-2-deoxy-D-gluconate (DKG or 2-deoxy-5-keto-D-gluconate). The chain is 5-deoxy-glucuronate isomerase from Halalkalibacterium halodurans (strain ATCC BAA-125 / DSM 18197 / FERM 7344 / JCM 9153 / C-125) (Bacillus halodurans).